The chain runs to 179 residues: Inner membrane-spanning protein YciB (179 aa).

Transmembrane regions (helical) follow at residues 3-23, 24-44, 49-69, 76-96, 121-141, and 149-169; these read FLFD…ADIY, TATA…WFRH, PMQW…LVLH, WKPT…VLVW, LAWA…AYQF, and FKLF…SVWL.

It belongs to the YciB family.

The protein localises to the cell inner membrane. Plays a role in cell envelope biogenesis, maintenance of cell envelope integrity and membrane homeostasis. This chain is Inner membrane-spanning protein YciB, found in Cupriavidus taiwanensis (strain DSM 17343 / BCRC 17206 / CCUG 44338 / CIP 107171 / LMG 19424 / R1) (Ralstonia taiwanensis (strain LMG 19424)).